A 721-amino-acid polypeptide reads, in one-letter code: Rho GTPase-activating protein gacY (721 aa).

Residues 1-325 (MDSSFKRASF…PQQPQQQQST (325 aa)) are disordered. The segment covering 17–33 (NIDNINEMNNNNMNTAP) has biased composition (low complexity). Residues 34–44 (APAPAPIPTPQ) show a composition bias toward pro residues. A compositionally biased stretch (low complexity) spans 146-168 (DNNNNGNNNNNNNNNDNNNNNNN). Over residues 169–181 (NDDDDEDEDDDEY) the composition is skewed to acidic residues. 2 stretches are compositionally biased toward polar residues: residues 182–202 (SNVS…NTMN) and 219–240 (KNDS…SSRR). The span at 308–323 (QQQQQPQQPQQPQQQQ) shows a compositional bias: low complexity. The region spanning 363 to 520 (KSQRFPEIEA…AIMMHRPAGK (158 aa)) is the CRAL-TRIO domain. The 192-residue stretch at 528-719 (APLEDVINRP…LILDNINILF (192 aa)) folds into the Rho-GAP domain.

It localises to the cytoplasm. Its function is as follows. Rho GTPase-activating protein involved in the signal transduction pathway. The protein is Rho GTPase-activating protein gacY (gacY) of Dictyostelium discoideum (Social amoeba).